A 72-amino-acid polypeptide reads, in one-letter code: MLNPPLNQLTSQIKSKYLIATTAAKRAREIDEQPETELLSEYHSFKPVGRALEEIADGKIRPVISSDYYGKE.

The protein belongs to the RNA polymerase subunit omega family. In terms of assembly, the RNAP catalytic core consists of 2 alpha, 1 beta, 1 beta' and 1 omega subunit. When a sigma factor is associated with the core the holoenzyme is formed, which can initiate transcription.

It carries out the reaction RNA(n) + a ribonucleoside 5'-triphosphate = RNA(n+1) + diphosphate. Functionally, promotes RNA polymerase assembly. Latches the N- and C-terminal regions of the beta' subunit thereby facilitating its interaction with the beta and alpha subunits. This is DNA-directed RNA polymerase subunit omega from Staphylococcus aureus (strain Mu3 / ATCC 700698).